We begin with the raw amino-acid sequence, 218 residues long: 7-cyano-7-deazaguanine synthase 1 (218 aa).

Tyr9 to Leu19 serves as a coordination point for ATP. Residues Cys185, Cys193, Cys196, and Cys199 each contribute to the Zn(2+) site.

This sequence belongs to the QueC family. It depends on Zn(2+) as a cofactor.

The catalysed reaction is 7-carboxy-7-deazaguanine + NH4(+) + ATP = 7-cyano-7-deazaguanine + ADP + phosphate + H2O + H(+). It functions in the pathway purine metabolism; 7-cyano-7-deazaguanine biosynthesis. In terms of biological role, catalyzes the ATP-dependent conversion of 7-carboxy-7-deazaguanine (CDG) to 7-cyano-7-deazaguanine (preQ(0)). The protein is 7-cyano-7-deazaguanine synthase 1 of Colwellia psychrerythraea (strain 34H / ATCC BAA-681) (Vibrio psychroerythus).